The sequence spans 181 residues: Kappa-casein (181 aa).

The N-terminal stretch at 1-21 (MMRNFIVVVNILALTLPFLAA) is a signal peptide. Thr123 carries the phosphothreonine modification. O-linked (GalNAc...) threonine glycosylation is found at Thr134, Thr144, and Thr155. Ser162 bears the Phosphoserine; alternate mark. Ser162 carries an O-linked (GalNAc...) serine; alternate glycan. Residue Ser178 is modified to Phosphoserine.

It belongs to the kappa-casein family. Mammary gland specific. Secreted in milk.

It localises to the secreted. Kappa-casein stabilizes micelle formation, preventing casein precipitation in milk. The protein is Kappa-casein (Csn3) of Mus musculus (Mouse).